Here is a 291-residue protein sequence, read N- to C-terminus: Syntaxin-1A homolog (291 aa).

Residues 1–24 form a disordered region; that stretch reads MTKDRLSALKAAQSEDEQDDDMHM. The Cytoplasmic segment spans residues 1-266; it reads MTKDRLSALK…QYQSKARRKK (266 aa). Positions 69 to 95 form a coiled coil; that stretch reads NDQKTKEELDELMAVIKRAANKVRGKL. Residues 193 to 255 enclose the t-SNARE coiled-coil homology domain; it reads LADIEARHND…DRAVADTKKA (63 aa). A helical; Anchor for type IV membrane protein transmembrane segment spans residues 267 to 287; the sequence is ICILVTGVILITGLIIFILFY. At 288 to 291 the chain is on the extracellular side; it reads AKVL.

This sequence belongs to the syntaxin family. As to quaternary structure, interacts (via N-terminus, in open or in closed conformation) with unc-18; the interaction is direct. Interaction in open conformation with unc-18 promotes synaptic vesicle docking and tethering. Interaction via N-terminus with unc-18 mediates the secretion of the neurotransmitter acetylcholine from cholinergic motor neurons. Interaction with unc-18 is reduced in the presence of unc-13. As to expression, expressed throughout the head ganglion, nerve ring, ventral cord, dorsal cord, intestine, vulva and spermatheca.

It localises to the cell membrane. The protein resides in the cell projection. It is found in the axon. Its subcellular location is the dendrite. The protein localises to the perikaryon. In terms of biological role, plays a critical role in several secretory processes, including cuticle secretion and neurotransmitter release, and probably assists in neuronal membrane maturation or the final stages of neuronal differentiation. Plays a role in synaptic vesicle docking and tethering through its association with unc-18. Through binding to unc-18 mediates the release of the neurotransmitter acetylcholine from cholinergic motor neurons, and thereby promotes locomotory behaviors. Essential for embryonic viability and development. Has a role in dauer formation and adult life span. Required for locomotion. Probably by regulating neuronal transmission downstream of lin-3 and receptor lin-23 and phospholipase plc-3 and upstream of innexin unc-7 and egl-4/PKG in ALA neurons, involved in the decrease in pharyngeal pumping during the quiescent state that precedes each larval molt. The sequence is that of Syntaxin-1A homolog from Caenorhabditis elegans.